The sequence spans 137 residues: Large ribosomal subunit protein eL28 (137 aa).

An N-acetylserine modification is found at S2. Residues K58 and K65 each participate in a glycyl lysine isopeptide (Lys-Gly) (interchain with G-Cter in SUMO2) cross-link. S115 is subject to Phosphoserine.

The protein belongs to the eukaryotic ribosomal protein eL28 family. As to quaternary structure, component of the large ribosomal subunit.

The protein resides in the cytoplasm. Component of the large ribosomal subunit. The ribosome is a large ribonucleoprotein complex responsible for the synthesis of proteins in the cell. The chain is Large ribosomal subunit protein eL28 (Rpl28) from Mus musculus (Mouse).